We begin with the raw amino-acid sequence, 707 residues long: D-(-)-3-hydroxybutyrate oligomer hydrolase (707 aa).

The signal sequence occupies residues 1–24 (MHHDNFRRLGNAAFAAAAALLAVA). Ser311 (charge relay system) is an active-site residue.

It belongs to the D-(-)-3-hydroxybutyrate oligomer hydrolase family.

The protein resides in the secreted. It catalyses the reaction (3R)-hydroxybutanoate dimer + H2O = 2 (R)-3-hydroxybutanoate + H(+). Its pathway is lipid metabolism; butanoate metabolism. Functionally, participates in the degradation of poly-3-hydroxybutyrate (PHB). It works downstream of poly(3-hydroxybutyrate) depolymerase, hydrolyzing D(-)-3-hydroxybutyrate oligomers of various length (3HB-oligomers) into 3HB-monomers. This is D-(-)-3-hydroxybutyrate oligomer hydrolase from Cupriavidus pinatubonensis (strain JMP 134 / LMG 1197) (Cupriavidus necator (strain JMP 134)).